The following is a 362-amino-acid chain: Glycyl-glycine endopeptidase ALE-1 (362 aa).

A signal peptide spans Met-1–Ala-35. Residues Ala-35–Glu-110 form a disordered region. The span at Asp-40 to Glu-110 shows a compositional bias: basic and acidic residues. His-150 and Asp-154 together coordinate Zn(2+). Residue His-231 is part of the active site. His-233 lines the Zn(2+) pocket. The SH3b domain occupies Ser-282–Ser-350.

This sequence belongs to the peptidase M23B family. The cofactor is Zn(2+).

Its subcellular location is the secreted. The catalysed reaction is Hydrolysis of the -Gly-|-Gly- bond in the pentaglycine inter-peptide link joining staphylococcal cell wall peptidoglycans.. Its function is as follows. Lyses staphylococcal cells by hydrolyzing the polyglycine interpeptide bridges of the peptidoglycan. The polypeptide is Glycyl-glycine endopeptidase ALE-1 (Staphylococcus capitis).